A 638-amino-acid polypeptide reads, in one-letter code: Zinc finger protein 143 (638 aa).

The residue at position 1 (Met-1) is an N-acetylmethionine. Lys-213 is covalently cross-linked (Glycyl lysine isopeptide (Lys-Gly) (interchain with G-Cter in SUMO2)). 4 consecutive C2H2-type zinc fingers follow at residues 237–261 (FRCKYDGCGKLYTTAHHLKVHERSH), 267–291 (YQCEHSGCGKAFATGYGLKSHFRTH), 297–321 (YRCSEDNCTKSFKTSGDLQKHIRTH), and 327–351 (FKCPIEGCGRSFTTSNIRKVHIRTH). Thr-352 carries the phosphothreonine modification. 3 consecutive C2H2-type zinc fingers follow at residues 357-381 (YYCTEPGCGRAFASATNYKNHVRIH), 387-411 (YVCTVPGCDKRFTEYSSLYKHHVVH), and 417-440 (YNCNHCGKTYKQISTLAMHKRTAH). A Glycyl lysine isopeptide (Lys-Gly) (interchain with G-Cter in SUMO2) cross-link involves residue Lys-406.

It belongs to the GLI C2H2-type zinc-finger protein family. In terms of assembly, interacts with CHD8. Forms a complex with HCFC1 and ZNF143.

It localises to the nucleus. Its function is as follows. Transcriptional activator. Activates the gene for selenocysteine tRNA (tRNAsec). Binds to the SPH motif of small nuclear RNA (snRNA) gene promoters. Participates in efficient U6 RNA polymerase III transcription via its interaction with CHD8. In complex with HCFC1 and ZNF143, regulates the expression of several genes, including AP2S1, ESCO2, OPHN1, RBL1, UBXN8 and ZNF32. The protein is Zinc finger protein 143 (Znf143) of Mus musculus (Mouse).